A 122-amino-acid chain; its full sequence is Large ribosomal subunit protein uL14c (122 aa).

Belongs to the universal ribosomal protein uL14 family. As to quaternary structure, part of the 50S ribosomal subunit.

Its subcellular location is the plastid. It localises to the chloroplast. Its function is as follows. Binds to 23S rRNA. The sequence is that of Large ribosomal subunit protein uL14c from Calycanthus floridus var. glaucus (Eastern sweetshrub).